A 93-amino-acid polypeptide reads, in one-letter code: Defensin-like protein 210 (93 aa).

Residues 1–19 form the signal peptide; the sequence is MKTIILFLTLLVISSSCTS. Intrachain disulfides connect Cys-63-Cys-80, Cys-66-Cys-85, and Cys-70-Cys-87.

The protein belongs to the DEFL family.

It is found in the secreted. The sequence is that of Defensin-like protein 210 from Arabidopsis thaliana (Mouse-ear cress).